The chain runs to 213 residues: NADH dehydrogenase [ubiquinone] iron-sulfur protein 7, mitochondrial (213 aa).

Residues 1 to 38 (MAVLSAPGLRGFRILGLRSSVGPAVQARGVHQSVATDG) constitute a mitochondrion transit peptide. Residues 31 to 53 (HQSVATDGPSSTQPALPKARAVA) are disordered. Positions 33-44 (SVATDGPSSTQP) are enriched in polar residues. [4Fe-4S] cluster-binding residues include C88 and C89. Hydroxyarginine is present on R111. [4Fe-4S] cluster is bound by residues C153 and C183.

This sequence belongs to the complex I 20 kDa subunit family. In terms of assembly, core subunit of respiratory chain NADH dehydrogenase (Complex I) which is composed of 45 different subunits. This is a component of the iron-sulfur (IP) fragment of the enzyme. [4Fe-4S] cluster is required as a cofactor. In terms of processing, hydroxylated at Arg-111 by NDUFAF5 early in the pathway of assembly of complex I, before the formation of the juncture between peripheral and membrane arms.

It is found in the mitochondrion inner membrane. The enzyme catalyses a ubiquinone + NADH + 5 H(+)(in) = a ubiquinol + NAD(+) + 4 H(+)(out). Functionally, core subunit of the mitochondrial membrane respiratory chain NADH dehydrogenase (Complex I) which catalyzes electron transfer from NADH through the respiratory chain, using ubiquinone as an electron acceptor. Essential for the catalytic activity of complex I. The polypeptide is NADH dehydrogenase [ubiquinone] iron-sulfur protein 7, mitochondrial (NDUFS7) (Homo sapiens (Human)).